Consider the following 316-residue polypeptide: Very long chain fatty acid elongase 6 (316 aa).

N-linked (GlcNAc...) asparagine glycosylation is present at Asn-11. 6 helical membrane-spanning segments follow: residues 30 to 50, 64 to 84, 117 to 137, 142 to 162, 167 to 189, and 202 to 222; these read WMLE…LVIF, LRGP…MGAA, FWTW…IFIV, PLIF…WFSY, SSAR…YYAL, and MIIT…NVWA. An N-linked (GlcNAc...) asparagine glycan is attached at Asn-242. The chain crosses the membrane as a helical span at residues 245–265; the sequence is IAMYSSYFVLFARFFYKAYLA.

The protein belongs to the ELO family. ELOVL6 subfamily. Detected in the CNS (central nervous system) of third larval instar (at protein level). Expressed in cyst progenitor cells (at protein level). In the adult fly, expressed in several tissues including, sperm, follicular epithelium, nurse cells and cyst cells.

The protein localises to the mitochondrion outer membrane. It localises to the endoplasmic reticulum membrane. It catalyses the reaction a very-long-chain acyl-CoA + malonyl-CoA + H(+) = a very-long-chain 3-oxoacyl-CoA + CO2 + CoA. The enzyme catalyses hexadecanoyl-CoA + malonyl-CoA + H(+) = 3-oxooctadecanoyl-CoA + CO2 + CoA. It participates in lipid metabolism; fatty acid biosynthesis. Catalyzes the first and rate-limiting reaction of the four reactions that constitute the long-chain fatty acids elongation cycle. This process allows the addition of 2 carbons to the chain of long- and very long-chain fatty acids (VLCFAs) per cycle. Condensing enzyme that elongates fatty acids with 12, 14 and 16 carbons with higher activity toward C16:0 acyl-CoAs. Catalyzes the synthesis of unsaturated C16 long chain fatty acids and, to a lesser extent, C18:0 and those with low desaturation degree. May participate in the production of saturated and monounsaturated VLCFAs of different chain lengths that are involved in multiple biological processes as precursors of membrane lipids and lipid mediators. The chain is Very long chain fatty acid elongase 6 from Drosophila melanogaster (Fruit fly).